A 495-amino-acid polypeptide reads, in one-letter code: MSTAAKQNRSTSRVSKKKTAAPKEGAAKKSDKGHKYEYVELAKASLTSAQPQHFYAVVIDATFPYKTNQERYICSLKIVDPTLYLKQQKGAGDASDYATLVLYAKRFEDLPIIHRAGDIIRVHRATLRLYNGQRQFNANVFYSSSWALFSTDKRSVTQEINNQDAVSDTTPFSFSSKHATIEKNEISILQNLRKWANQYFSSYSVISSDMYTALNKAQAQKGDFDVVAKILQVHELDEYTNELKLKDASGQVFYTLSLKLKFPHVRTGEVVRIRSATYDETSTQKKVLILSHYSNIITFIQSSKLAKELRAKIQDDHSVEVASLKKNVSLNAVVLTEVDKKHAALPSTSLQDLFHHADSDKELQAQDTFRTQFYVTKIEPSDVKEWVKGYDRKTKKSSSLKGASGKGDNIFQVQFLVKDASTQLNNNTYRVLLYTQDGLGANFFNVKADNLHKNADARKKLEDSAELLTKFNSYVDAVVERRNGFYLIKDTKLIY.

Polar residues predominate over residues 1–13 (MSTAAKQNRSTSR). The segment at 1 to 31 (MSTAAKQNRSTSRVSKKKTAAPKEGAAKKSD) is disordered.

This sequence belongs to the telombin family. In terms of assembly, heterodimer of an alpha and a beta subunit.

It is found in the nucleus. The protein localises to the chromosome. The protein resides in the telomere. May function as protective capping of the single-stranded telomeric overhang. May also participate in telomere length regulation during DNA replication. Binds specifically to the T4G4-containing extension on the 3'strand and protects this region of the telomere from nuclease digestion and chemical modification. The protein is Telomere-binding protein subunit alpha (MAC-56A) of Sterkiella nova (Ciliate).